A 513-amino-acid polypeptide reads, in one-letter code: Probable cytosol aminopeptidase (513 aa).

K275 and D280 together coordinate Mn(2+). K287 is an active-site residue. Positions 298, 357, and 359 each coordinate Mn(2+). The active site involves R361.

The protein belongs to the peptidase M17 family. Requires Mn(2+) as cofactor.

The protein resides in the cytoplasm. The catalysed reaction is Release of an N-terminal amino acid, Xaa-|-Yaa-, in which Xaa is preferably Leu, but may be other amino acids including Pro although not Arg or Lys, and Yaa may be Pro. Amino acid amides and methyl esters are also readily hydrolyzed, but rates on arylamides are exceedingly low.. It carries out the reaction Release of an N-terminal amino acid, preferentially leucine, but not glutamic or aspartic acids.. In terms of biological role, presumably involved in the processing and regular turnover of intracellular proteins. Catalyzes the removal of unsubstituted N-terminal amino acids from various peptides. The sequence is that of Probable cytosol aminopeptidase from Streptomyces avermitilis (strain ATCC 31267 / DSM 46492 / JCM 5070 / NBRC 14893 / NCIMB 12804 / NRRL 8165 / MA-4680).